Here is a 127-residue protein sequence, read N- to C-terminus: Small ribosomal subunit protein uS11 (127 aa).

The protein belongs to the universal ribosomal protein uS11 family. Part of the 30S ribosomal subunit. Interacts with proteins S7 and S18. Binds to IF-3.

In terms of biological role, located on the platform of the 30S subunit, it bridges several disparate RNA helices of the 16S rRNA. Forms part of the Shine-Dalgarno cleft in the 70S ribosome. In Ruthia magnifica subsp. Calyptogena magnifica, this protein is Small ribosomal subunit protein uS11.